We begin with the raw amino-acid sequence, 117 residues long: Immunoglobulin kappa variable 9-129 (117 aa).

A signal peptide spans 1–22 (MDMRAPAQVFGFLLLWFPGARC). Residues 23-45 (DIQMTQSPSSLSASLGERVSLTC) form a framework-1 region. C45 and C110 are joined by a disulfide. The interval 46 to 56 (RASQDIHGYLN) is complementarity-determining-1. Residues 57–71 (LFQQKPGETIKHLIY) form a framework-2 region. Positions 72-78 (ETSNLDS) are complementarity-determining-2. Residues 79 to 110 (GVPKRFSGSRSGSDYSLIIGSLESEDFADYYC) form a framework-3 region. The interval 111–117 (LQYASSP) is complementarity-determining-3.

The protein is Immunoglobulin kappa variable 9-129 of Mus musculus (Mouse).